The primary structure comprises 158 residues: Transcription elongation factor GreA (158 aa).

A coiled-coil region spans residues 4-75; the sequence is EKTYPMTQEG…TQLENMIRNA (72 aa).

This sequence belongs to the GreA/GreB family.

Functionally, necessary for efficient RNA polymerase transcription elongation past template-encoded arresting sites. The arresting sites in DNA have the property of trapping a certain fraction of elongating RNA polymerases that pass through, resulting in locked ternary complexes. Cleavage of the nascent transcript by cleavage factors such as GreA or GreB allows the resumption of elongation from the new 3'terminus. GreA releases sequences of 2 to 3 nucleotides. The sequence is that of Transcription elongation factor GreA from Bacillus cereus (strain ATCC 10987 / NRS 248).